The sequence spans 275 residues: 3-methyl-2-oxobutanoate hydroxymethyltransferase (275 aa).

Positions 49 and 88 each coordinate Mg(2+). 3-methyl-2-oxobutanoate-binding positions include aspartate 49 to serine 50, aspartate 88, and lysine 118. Position 120 (glutamate 120) interacts with Mg(2+). Glutamate 187 (proton acceptor) is an active-site residue.

This sequence belongs to the PanB family. In terms of assembly, homodecamer; pentamer of dimers. It depends on Mg(2+) as a cofactor.

The protein localises to the cytoplasm. It carries out the reaction 3-methyl-2-oxobutanoate + (6R)-5,10-methylene-5,6,7,8-tetrahydrofolate + H2O = 2-dehydropantoate + (6S)-5,6,7,8-tetrahydrofolate. It participates in cofactor biosynthesis; (R)-pantothenate biosynthesis; (R)-pantoate from 3-methyl-2-oxobutanoate: step 1/2. Its function is as follows. Catalyzes the reversible reaction in which hydroxymethyl group from 5,10-methylenetetrahydrofolate is transferred onto alpha-ketoisovalerate to form ketopantoate. This chain is 3-methyl-2-oxobutanoate hydroxymethyltransferase, found in Hyphomonas neptunium (strain ATCC 15444).